We begin with the raw amino-acid sequence, 110 residues long: Large ribosomal subunit protein P2 (110 aa).

The interval 63-110 (ASVPSGGGVAAAAPAAGGGGADPAEAKEEKKEEPEEESDDDMGFGLFD) is disordered. The span at 86-95 (AEAKEEKKEE) shows a compositional bias: basic and acidic residues.

Belongs to the eukaryotic ribosomal protein P1/P2 family. As to quaternary structure, P1 and P2 exist as dimers at the large ribosomal subunit. In terms of processing, phosphorylated.

Functionally, plays an important role in the elongation step of protein synthesis. The sequence is that of Large ribosomal subunit protein P2 from Cryptochiton stelleri (Giant gumboot chiton).